Here is a 448-residue protein sequence, read N- to C-terminus: Adenylosuccinate synthetase (448 aa).

GTP is bound by residues 22–28 and 50–52; these read GDEGKGK and GHT. Catalysis depends on Asp-23, which acts as the Proton acceptor. Mg(2+)-binding residues include Asp-23 and Gly-50. Residues 23 to 26, 48 to 51, Thr-139, Arg-153, Gln-234, Thr-249, and Arg-321 each bind IMP; these read DEGK and NAGH. His-51 acts as the Proton donor in catalysis. A substrate-binding site is contributed by 317–323; that stretch reads SVTGRPR. Residues Arg-323, 349 to 351, and 431 to 433 contribute to the GTP site; these read KLD and STG.

This sequence belongs to the adenylosuccinate synthetase family. Homodimer. Mg(2+) serves as cofactor.

The protein localises to the cytoplasm. The catalysed reaction is IMP + L-aspartate + GTP = N(6)-(1,2-dicarboxyethyl)-AMP + GDP + phosphate + 2 H(+). Its pathway is purine metabolism; AMP biosynthesis via de novo pathway; AMP from IMP: step 1/2. Its function is as follows. Plays an important role in the de novo pathway of purine nucleotide biosynthesis. Catalyzes the first committed step in the biosynthesis of AMP from IMP. This is Adenylosuccinate synthetase from Burkholderia pseudomallei (strain 1106a).